The sequence spans 314 residues: Taste receptor type 2 member 42 (314 aa).

Over Met-1–Lys-7 the chain is Extracellular. The chain crosses the membrane as a helical span at residues Ile-8–Gly-28. At Leu-29–Cys-50 the chain is on the cytoplasmic side. The helical transmembrane segment at Leu-51 to Leu-71 threads the bilayer. Residues Ala-72 to Thr-101 are Extracellular-facing. A helical membrane pass occupies residues Cys-102–Leu-122. Over Arg-123–Asn-127 the chain is Cytoplasmic. A helical membrane pass occupies residues Gly-128–Leu-148. Topologically, residues Lys-149–Leu-187 are extracellular. Residue Asn-163 is glycosylated (N-linked (GlcNAc...) asparagine). The helical transmembrane segment at Thr-188 to Val-208 threads the bilayer. Residues Arg-209–Ser-238 lie on the Cytoplasmic side of the membrane. A helical transmembrane segment spans residues Phe-239 to Met-259. Residues Ser-260 to Tyr-265 are Extracellular-facing. Residues Ile-266–Leu-286 traverse the membrane as a helical segment. The Cytoplasmic segment spans residues Gly-287–Leu-314.

Belongs to the G-protein coupled receptor T2R family.

It localises to the membrane. Receptor that may play a role in the perception of bitterness and is gustducin-linked. May play a role in sensing the chemical composition of the gastrointestinal content. The activity of this receptor may stimulate alpha gustducin, mediate PLC-beta-2 activation and lead to the gating of TRPM5. This chain is Taste receptor type 2 member 42 (TAS2R42), found in Pongo pygmaeus (Bornean orangutan).